We begin with the raw amino-acid sequence, 604 residues long: Proline--tRNA ligase (604 aa).

This sequence belongs to the class-II aminoacyl-tRNA synthetase family. ProS type 1 subfamily. As to quaternary structure, homodimer.

It is found in the cytoplasm. The catalysed reaction is tRNA(Pro) + L-proline + ATP = L-prolyl-tRNA(Pro) + AMP + diphosphate. Catalyzes the attachment of proline to tRNA(Pro) in a two-step reaction: proline is first activated by ATP to form Pro-AMP and then transferred to the acceptor end of tRNA(Pro). As ProRS can inadvertently accommodate and process non-cognate amino acids such as alanine and cysteine, to avoid such errors it has two additional distinct editing activities against alanine. One activity is designated as 'pretransfer' editing and involves the tRNA(Pro)-independent hydrolysis of activated Ala-AMP. The other activity is designated 'posttransfer' editing and involves deacylation of mischarged Ala-tRNA(Pro). The misacylated Cys-tRNA(Pro) is not edited by ProRS. The sequence is that of Proline--tRNA ligase from Trichormus variabilis (strain ATCC 29413 / PCC 7937) (Anabaena variabilis).